Here is a 386-residue protein sequence, read N- to C-terminus: 3-ketosteroid-9-alpha-monooxygenase, oxygenase component (386 aa).

Positions Trp26–Val128 constitute a Rieske domain. Cys67, His69, Cys86, and His89 together coordinate [2Fe-2S] cluster. Asn175, His181, His186, and Asp304 together coordinate Fe cation.

Homotrimer. The two-component system 3-ketosteroid-9-alpha-monooxygenase is composed of an oxygenase component KshA and a reductase component KshB. [2Fe-2S] cluster is required as a cofactor. The cofactor is Fe cation.

It catalyses the reaction androsta-1,4-diene-3,17-dione + 2 reduced [2Fe-2S]-[ferredoxin] + O2 + 2 H(+) = 9alpha-hydroxyandrosta-1,4-diene-3,17-dione + 2 oxidized [2Fe-2S]-[ferredoxin] + H2O. It carries out the reaction androst-4-ene-3,17-dione + NADH + O2 + H(+) = 9alpha-hydroxy-androst-4-ene-3,17-dione + NAD(+) + H2O. The enzyme catalyses 3-oxochol-4-en-22-oate + NADH + O2 + H(+) = 9alpha-hydroxy-3-oxochol-4-en-22-oate + NAD(+) + H2O. The catalysed reaction is 3-oxochola-1,4-dien-22-oate + NADH + O2 + H(+) = 9alpha-hydroxy-3-oxochola-1,4-dien-22-oate + NAD(+) + H2O. It catalyses the reaction 3-oxochol-4-en-22-oyl-CoA + NADH + O2 + H(+) = 9alpha-hydroxy-3-oxochol-4-en-22-oyl-CoA + NAD(+) + H2O. It carries out the reaction 3-oxochola-1,4-dien-22-oyl-CoA + NADH + O2 + H(+) = 9alpha-hydroxy-3-oxochola-1,4-dien-22-oyl-CoA + NAD(+) + H2O. Its pathway is lipid metabolism; steroid biosynthesis. Its function is as follows. Involved in the degradation of cholesterol. Catalyzes the introduction of a 9a-hydroxyl moiety into 1,4-androstadiene-3,17-dione (ADD) to yield the 9alpha-hydroxy-1,4-androstadiene-3,17-dione (9OHADD) intermediate which spontaneously form 3-hydroxy-9,10-seconandrost-1,3,5(10)-triene-9,17-dione (HSA) via the meta-cleavage of ring B with concomitant aromatization of ring A. KSH is also able to use 4-androstene-3,17-dione (AD), 3-oxo-23,24-bisnorcholesta-4-en-22-oate (4-BNC), 3-oxo-23,24-bisnorcholesta-1,4-dien-22-oate (1,4-BNC), 3-oxo-23,24-bisnorcholesta-4-en-22-oyl-coenzyme A thioester (4-BNC-CoA) and 3-oxo-23,24-bisnorcholesta-1,4-dien-22-oyl-coenzyme A thioester (1,4-BNC-CoA) as substrates. This chain is 3-ketosteroid-9-alpha-monooxygenase, oxygenase component (kshA), found in Mycobacterium tuberculosis (strain ATCC 25618 / H37Rv).